The following is a 480-amino-acid chain: Alpha-glucosidase (480 aa).

4–70 (VKIGIIGAGS…ADLKFEKTTS (67 aa)) contributes to the NAD(+) binding site. Residues Asp119 and Asn153 each coordinate substrate. Cys174 provides a ligand contact to Mn(2+). The Proton donor role is filled by His175. His203 contacts Mn(2+). Asp260 (proton acceptor) is an active-site residue.

The protein belongs to the glycosyl hydrolase 4 family. As to quaternary structure, homodimer. It depends on NAD(+) as a cofactor. Requires Mn(2+) as cofactor.

It carries out the reaction Hydrolysis of terminal, non-reducing (1-&gt;4)-linked alpha-D-glucose residues with release of alpha-D-glucose.. Its activity is regulated as follows. Inhibited by EDTA in vitro. In terms of biological role, is able to hydrolyze diverse types of alpha-glycoside bonds in di- and trisaccharides: alpha-1,4 bonds of maltose and maltotriose, alpha-1,1 bonds of trehalose, alpha-1,2 bonds of sucrose, alpha-1,3 bonds of turanose and melizitose, alpha-1,6 bonds of isomaltose and melibiose. AglA is not specific with respect to the configuration at the C-4 position of its substrates because it also possesses alpha-galactosidase activity. Acts on the substrate from the non-reducing end of the chain. The activity of AglA drops with increasing length of the saccharide chain. Does not hydrolyze alpha-, beta-, and gamma-cyclodextrins or polysaccharides (starch, pullulan, amylose, amylopectin, glycogen). Does not cleave beta-glycosidic bonds in di-, oligo-, or polysaccharides. The protein is Alpha-glucosidase (aglA) of Thermotoga neapolitana.